Here is a 554-residue protein sequence, read N- to C-terminus: GPI transamidase component PIG-S homolog (554 aa).

Residues 1 to 73 (MSPCKWLTMF…LNKPEKSLKR (73 aa)) are Cytoplasmic-facing. The chain crosses the membrane as a helical span at residues 74–94 (YALLSFYVIILLAIPVWWKTT). Residues 95 to 511 (HYERSSLPFE…VTTIYFPDES (417 aa)) are Lumenal-facing. 2 N-linked (GlcNAc...) asparagine glycosylation sites follow: Asn-132 and Asn-375. Residues 512-532 (KYGIYAPLFAPILIPLLISFI) traverse the membrane as a helical segment. Over 533 to 554 (KEVKDMLRERKLHRVANVPKPN) the chain is Cytoplasmic.

Belongs to the PIGS family. Forms a complex with PIG-T homolog, PIG-U homolog and GPI8.

It localises to the endoplasmic reticulum membrane. The protein operates within glycolipid biosynthesis; glycosylphosphatidylinositol-anchor biosynthesis. Its function is as follows. Component of the GPI transamidase complex. Involved in transfer of GPI to proteins. This is GPI transamidase component PIG-S homolog (gpi17) from Schizosaccharomyces pombe (strain 972 / ATCC 24843) (Fission yeast).